An 800-amino-acid polypeptide reads, in one-letter code: DNA topoisomerase 4 subunit A (800 aa).

The 465-residue stretch at 31 to 495 (LPDVRDGLKP…EIEEIKIDKE (465 aa)) folds into the Topo IIA-type catalytic domain. Tyr119 (O-(5'-phospho-DNA)-tyrosine intermediate) is an active-site residue.

Belongs to the type II topoisomerase GyrA/ParC subunit family. ParC type 2 subfamily. As to quaternary structure, heterotetramer composed of ParC and ParE.

Its subcellular location is the cell membrane. It catalyses the reaction ATP-dependent breakage, passage and rejoining of double-stranded DNA.. Its function is as follows. Topoisomerase IV is essential for chromosome segregation. It relaxes supercoiled DNA. Performs the decatenation events required during the replication of a circular DNA molecule. This chain is DNA topoisomerase 4 subunit A, found in Staphylococcus aureus.